A 298-amino-acid chain; its full sequence is MVTKPDWLRVKAPQRERVGAVKDILRDLALNTVCEEASCPNIGECFKAGTATFLIMGPACTRACPYCDIDFEKYPKALDPTEPERLAQAVRRMGLRHVVITSVNRDDLADGGALQFARCIEAVRRVMPQTTIEVLIPDFCGSEAALDIVIAAHPQVINHNTETVPRLYRRVRPQGDYGRTLQLLERVRAKASHIYTKSGLMAGLGESEAEVLAVMADLRAVYCDILTIGQYLQPTPKHLKVEAFVEPALFERWRRAGEGMGFLQMVSSPLTRSSYHAEQVQRLMRSHPRTPKNQHSPE.

The [4Fe-4S] cluster site is built by Cys-34, Cys-39, Cys-45, Cys-60, Cys-64, Cys-67, and Ser-274. The Radical SAM core domain maps to 46-263 (FKAGTATFLI…RRAGEGMGFL (218 aa)). The interval 277–298 (AEQVQRLMRSHPRTPKNQHSPE) is disordered.

The protein belongs to the radical SAM superfamily. Lipoyl synthase family. [4Fe-4S] cluster is required as a cofactor.

The protein localises to the cytoplasm. It carries out the reaction [[Fe-S] cluster scaffold protein carrying a second [4Fe-4S](2+) cluster] + N(6)-octanoyl-L-lysyl-[protein] + 2 oxidized [2Fe-2S]-[ferredoxin] + 2 S-adenosyl-L-methionine + 4 H(+) = [[Fe-S] cluster scaffold protein] + N(6)-[(R)-dihydrolipoyl]-L-lysyl-[protein] + 4 Fe(3+) + 2 hydrogen sulfide + 2 5'-deoxyadenosine + 2 L-methionine + 2 reduced [2Fe-2S]-[ferredoxin]. Its pathway is protein modification; protein lipoylation via endogenous pathway; protein N(6)-(lipoyl)lysine from octanoyl-[acyl-carrier-protein]: step 2/2. Its function is as follows. Catalyzes the radical-mediated insertion of two sulfur atoms into the C-6 and C-8 positions of the octanoyl moiety bound to the lipoyl domains of lipoate-dependent enzymes, thereby converting the octanoylated domains into lipoylated derivatives. The sequence is that of Lipoyl synthase 1 from Gloeobacter violaceus (strain ATCC 29082 / PCC 7421).